We begin with the raw amino-acid sequence, 496 residues long: T-cell activation inhibitor, mitochondrial (496 aa).

The stretch at 404-437 (KAQQARENMKRKEELKVIENELIQASTKKFSLEK) forms a coiled coil.

The protein resides in the mitochondrion. Functionally, may regulate T-cell apoptosis. The chain is T-cell activation inhibitor, mitochondrial (TCAIM) from Homo sapiens (Human).